Consider the following 1098-residue polypeptide: uncharacterized protein (1098 aa).

This is an uncharacterized protein from Invertebrate iridescent virus 3 (IIV-3).